The chain runs to 149 residues: Oligosaccharyltransferase complex subunit ostc-A (149 aa).

Topologically, residues 1 to 32 (MESLYRVPFTVLECPNLKLKKPSWLHMPSAMT) are cytoplasmic. A helical membrane pass occupies residues 33 to 53 (VYAMVVVSYFLITGGIIYDVI). Residues 54–83 (VEPPSVGSMTDEHGHQRPVAFLAYRVNGQY) lie on the Extracellular side of the membrane. A helical membrane pass occupies residues 84–104 (IMEGLASSFLFTMGGLGFIIL). Topologically, residues 105–117 (DRSNTPNIPKLNR) are cytoplasmic. Residues 118-138 (FLLLFIGFVCVLLSFFMARVF) traverse the membrane as a helical segment. Residues 139 to 149 (MRMKLPGYLMG) lie on the Extracellular side of the membrane.

The protein belongs to the OSTC family. As to quaternary structure, specific component of the STT3A-containing form of the oligosaccharyltransferase (OST) complex.

It localises to the membrane. It participates in protein modification; protein glycosylation. In terms of biological role, specific component of the STT3A-containing form of the oligosaccharyl transferase (OST) complex that catalyzes the initial transfer of a defined glycan (Glc(3)Man(9)GlcNAc(2) in eukaryotes) from the lipid carrier dolichol-pyrophosphate to an asparagine residue within an Asn-X-Ser/Thr consensus motif in nascent polypeptide chains, the first step in protein N-glycosylation. N-glycosylation occurs cotranslationally and the complex associates with the Sec61 complex at the channel-forming translocon complex that mediates protein translocation across the endoplasmic reticulum (ER). All subunits are required for a maximal enzyme activity. The polypeptide is Oligosaccharyltransferase complex subunit ostc-A (Xenopus laevis (African clawed frog)).